Here is a 505-residue protein sequence, read N- to C-terminus: 2,3-bisphosphoglycerate-independent phosphoglycerate mutase (505 aa).

Mn(2+)-binding residues include D12 and S62. S62 (phosphoserine intermediate) is an active-site residue. Residues H123, 153–154, R185, R191, 257–260, and K330 each bind substrate; these read RD and RPDR. Positions 397, 401, 438, 439, and 456 each coordinate Mn(2+).

Belongs to the BPG-independent phosphoglycerate mutase family. Monomer. Mn(2+) is required as a cofactor.

The catalysed reaction is (2R)-2-phosphoglycerate = (2R)-3-phosphoglycerate. It participates in carbohydrate degradation; glycolysis; pyruvate from D-glyceraldehyde 3-phosphate: step 3/5. In terms of biological role, catalyzes the interconversion of 2-phosphoglycerate and 3-phosphoglycerate. In Staphylococcus aureus (strain COL), this protein is 2,3-bisphosphoglycerate-independent phosphoglycerate mutase.